The following is a 279-amino-acid chain: Tryptophan 2,3-dioxygenase (279 aa).

Substrate contacts are provided by residues 48–52 (FIVIH), tyrosine 110, and arginine 114. Histidine 237 contributes to the heme binding site. Threonine 251 provides a ligand contact to substrate.

It belongs to the tryptophan 2,3-dioxygenase family. Homotetramer. Heme serves as cofactor.

It catalyses the reaction L-tryptophan + O2 = N-formyl-L-kynurenine. Its pathway is amino-acid degradation; L-tryptophan degradation via kynurenine pathway; L-kynurenine from L-tryptophan: step 1/2. Heme-dependent dioxygenase that catalyzes the oxidative cleavage of the L-tryptophan (L-Trp) pyrrole ring and converts L-tryptophan to N-formyl-L-kynurenine. Catalyzes the oxidative cleavage of the indole moiety. The polypeptide is Tryptophan 2,3-dioxygenase (Bacillus thuringiensis (strain Al Hakam)).